The sequence spans 64 residues: Large ribosomal subunit protein bL28 (64 aa).

Residues 1-27 (MAKRDQLTGKGPLSGNTRSHAMNHSKR) are disordered.

This sequence belongs to the bacterial ribosomal protein bL28 family.

In Ureaplasma parvum serovar 3 (strain ATCC 27815 / 27 / NCTC 11736), this protein is Large ribosomal subunit protein bL28.